The sequence spans 78 residues: Sec-independent protein translocase protein TatA (78 aa).

A helical membrane pass occupies residues 4-21 (SFQHILILLVVVLLLFGR). A disordered region spans residues 49-78 (TAKSDSIKTIDNTGKPTNVQANPQRQDSTV). The segment covering 57-78 (TIDNTGKPTNVQANPQRQDSTV) has biased composition (polar residues).

Belongs to the TatA/E family. In terms of assembly, the Tat system comprises two distinct complexes: a TatABC complex, containing multiple copies of TatA, TatB and TatC subunits, and a separate TatA complex, containing only TatA subunits. Substrates initially bind to the TatABC complex, which probably triggers association of the separate TatA complex to form the active translocon.

It is found in the cell inner membrane. In terms of biological role, part of the twin-arginine translocation (Tat) system that transports large folded proteins containing a characteristic twin-arginine motif in their signal peptide across membranes. TatA could form the protein-conducting channel of the Tat system. This Afipia carboxidovorans (strain ATCC 49405 / DSM 1227 / KCTC 32145 / OM5) (Oligotropha carboxidovorans) protein is Sec-independent protein translocase protein TatA.